An 872-amino-acid polypeptide reads, in one-letter code: Alanine--tRNA ligase (872 aa).

Zn(2+) is bound by residues His-567, His-571, Cys-669, and His-673.

It belongs to the class-II aminoacyl-tRNA synthetase family. It depends on Zn(2+) as a cofactor.

It localises to the cytoplasm. It catalyses the reaction tRNA(Ala) + L-alanine + ATP = L-alanyl-tRNA(Ala) + AMP + diphosphate. In terms of biological role, catalyzes the attachment of alanine to tRNA(Ala) in a two-step reaction: alanine is first activated by ATP to form Ala-AMP and then transferred to the acceptor end of tRNA(Ala). Also edits incorrectly charged Ser-tRNA(Ala) and Gly-tRNA(Ala) via its editing domain. The polypeptide is Alanine--tRNA ligase (Streptococcus sanguinis (strain SK36)).